The sequence spans 94 residues: uncharacterized protein (94 aa).

Residues 1–22 are disordered; it reads MATLQQAQQQNNQLTQQNNQLT. Residues 1–77 are a coiled coil; the sequence is MATLQQAQQQ…NRLHSENHRL (77 aa).

This is an uncharacterized protein from Acheta domesticus (House cricket).